Reading from the N-terminus, the 178-residue chain is Large ribosomal subunit protein uL6 (178 aa).

The protein belongs to the universal ribosomal protein uL6 family. In terms of assembly, part of the 50S ribosomal subunit.

Functionally, this protein binds to the 23S rRNA, and is important in its secondary structure. It is located near the subunit interface in the base of the L7/L12 stalk, and near the tRNA binding site of the peptidyltransferase center. This Leifsonia xyli subsp. xyli (strain CTCB07) protein is Large ribosomal subunit protein uL6.